Consider the following 585-residue polypeptide: Cytochrome c lysine N-methyltransferase 1 (585 aa).

The 256-residue stretch at 18–273 folds into the SET domain; sequence KSLSLKPSTI…KPIEVFISYS (256 aa). The tract at residues 186–288 is SET-like; that stretch reads LNLSDIKHLY…FSMLVTYGFT (103 aa).

It belongs to the class V-like SAM-binding methyltransferase superfamily.

It localises to the cytoplasm. The protein localises to the cytosol. It carries out the reaction L-lysyl-[cytochrome c] + S-adenosyl-L-methionine = N(6)-methyl-L-lysyl-[cytochrome c] + S-adenosyl-L-homocysteine + H(+). Methyltransferase which mediates trimethylation of 'Lys-78' of cytochrome c (CYC1). This Saccharomyces cerevisiae (strain ATCC 204508 / S288c) (Baker's yeast) protein is Cytochrome c lysine N-methyltransferase 1 (CTM1).